The sequence spans 92 residues: Small ribosomal subunit protein uS19 (92 aa).

The protein belongs to the universal ribosomal protein uS19 family.

Its function is as follows. Protein S19 forms a complex with S13 that binds strongly to the 16S ribosomal RNA. This chain is Small ribosomal subunit protein uS19, found in Bifidobacterium animalis subsp. lactis (strain AD011).